The sequence spans 613 residues: Spastin (613 aa).

Positions 1-42 are disordered; that stretch reads MNSPGGRGKKKGSAGSSSAPPAAGASPSAPSGPAPPAPPAGA. The Cytoplasmic segment spans residues 1–61; that stretch reads MNSPGGRGKK…KRNLYYFSYP (61 aa). The segment covering 13–29 has biased composition (low complexity); that stretch reads SAGSSSAPPAAGASPSA. Pro residues predominate over residues 30–39; sequence PSGPAPPAPP. An intramembrane region (helical) is located at residues 62–82; that stretch reads LFAAFALLRFVAFQLGLLVAW. At 83-613 the chain is on the cytoplasmic side; that stretch reads LCERLSRGAL…WNKDFGDTTV (531 aa). One can recognise an MIT domain in the interval 117–192; it reads HKRAFECISM…AMAKDRLQLL (76 aa). Positions 224–312 are disordered; sequence SESGAVPKKK…PAARKKKDTK (89 aa). Polar residues-rich tracts occupy residues 237–257, 264–274, and 281–299; these read THTS…STGL, PSYSGISTASV, and PATS…NKPS. Position 379–386 (379–386) interacts with ATP; the sequence is GPPGNGKT.

The protein belongs to the AAA ATPase family. Spastin subfamily. As to quaternary structure, homohexamer. The homohexamer is stabilized by ATP-binding. The homohexamer may adopt a ring conformation through which microtubules pass prior to being severed. Interacts with microtubules.

It is found in the membrane. The protein localises to the cytoplasm. It localises to the cytoskeleton. The protein resides in the microtubule organizing center. Its subcellular location is the centrosome. It is found in the perinuclear region. The protein localises to the nucleus. It catalyses the reaction n ATP + n H2O + a microtubule = n ADP + n phosphate + (n+1) alpha/beta tubulin heterodimers.. Its function is as follows. ATP-dependent microtubule severing protein that specifically recognizes and cuts microtubules that are polyglutamylated. Preferentially recognizes and acts on microtubules decorated with short polyglutamate tails: severing activity increases as the number of glutamates per tubulin rises from one to eight, but decreases beyond this glutamylation threshold. Microtubule severing promotes reorganization of cellular microtubule arrays and the release of microtubules from the centrosome following nucleation. Required for membrane traffic from the endoplasmic reticulum (ER) to the Golgi and for completion of the abscission stage of cytokinesis. Also plays a role in axon growth and the formation of axonal branches. In Gallus gallus (Chicken), this protein is Spastin.